The following is a 296-amino-acid chain: Inactive uridine phosphorylase B (296 aa).

It belongs to the PNP/UDP phosphorylase family. Homodimer.

The protein is Inactive uridine phosphorylase B of Schistosoma mansoni (Blood fluke).